Reading from the N-terminus, the 369-residue chain is Dual-specificity RNA methyltransferase RlmN (369 aa).

Glutamate 96 serves as the catalytic Proton acceptor. The 237-residue stretch at 102-338 (DGERGTLCVS…VTTIRTTRGD (237 aa)) folds into the Radical SAM core domain. Cysteine 109 and cysteine 344 are joined by a disulfide. Cysteine 116, cysteine 120, and cysteine 123 together coordinate [4Fe-4S] cluster. Residues 169–170 (GE), serine 201, 223–225 (SLH), and asparagine 301 each bind S-adenosyl-L-methionine. The active-site S-methylcysteine intermediate is the cysteine 344.

This sequence belongs to the radical SAM superfamily. RlmN family. It depends on [4Fe-4S] cluster as a cofactor.

It is found in the cytoplasm. It catalyses the reaction adenosine(2503) in 23S rRNA + 2 reduced [2Fe-2S]-[ferredoxin] + 2 S-adenosyl-L-methionine = 2-methyladenosine(2503) in 23S rRNA + 5'-deoxyadenosine + L-methionine + 2 oxidized [2Fe-2S]-[ferredoxin] + S-adenosyl-L-homocysteine. The catalysed reaction is adenosine(37) in tRNA + 2 reduced [2Fe-2S]-[ferredoxin] + 2 S-adenosyl-L-methionine = 2-methyladenosine(37) in tRNA + 5'-deoxyadenosine + L-methionine + 2 oxidized [2Fe-2S]-[ferredoxin] + S-adenosyl-L-homocysteine. Functionally, specifically methylates position 2 of adenine 2503 in 23S rRNA and position 2 of adenine 37 in tRNAs. m2A2503 modification seems to play a crucial role in the proofreading step occurring at the peptidyl transferase center and thus would serve to optimize ribosomal fidelity. This chain is Dual-specificity RNA methyltransferase RlmN, found in Marinobacter nauticus (strain ATCC 700491 / DSM 11845 / VT8) (Marinobacter aquaeolei).